The sequence spans 119 residues: Large ribosomal subunit protein bL20 (119 aa).

This sequence belongs to the bacterial ribosomal protein bL20 family.

Functionally, binds directly to 23S ribosomal RNA and is necessary for the in vitro assembly process of the 50S ribosomal subunit. It is not involved in the protein synthesizing functions of that subunit. This Ruthia magnifica subsp. Calyptogena magnifica protein is Large ribosomal subunit protein bL20.